Here is a 666-residue protein sequence, read N- to C-terminus: TATA box-binding protein-associated factor RNA polymerase I subunit B (666 aa).

An RRN7-type zinc finger spans residues 1–29 (MICTECENDAFDEEDDGYYYCQRCGVQVE). Residues Cys-3, Cys-6, Cys-21, and Cys-24 each contribute to the Zn(2+) site. Residues 30 to 64 (NLIQTGVDDGDLIGEGGGTQGALYNPKHRRTEPQP) are B-reader. Disordered stretches follow at residues 45-110 (GGGT…VDKE) and 189-208 (DSEH…LKRH). Residues 65 to 80 (ITPSQPRFTDDTSRYS) form a B-linker region. Residues 78-89 (RYSQFKSQFESE) are compositionally biased toward polar residues. Residues 81-285 (QFKSQFESEN…REQMGERSAA (205 aa)) are N-terminal cyclin fold. Basic and acidic residues-rich tracts occupy residues 90-110 (NGNK…VDKE) and 189-202 (DSEH…VKDA). Residues 286 to 288 (CPV) form a C-terminal cyclin fold region. A disordered region spans residues 515 to 548 (SDGNNPCSSSSRRNESVSIGLDLSSSEHRESSSP). The segment covering 539–548 (SSEHRESSSP) has biased composition (basic and acidic residues).

This sequence belongs to the RRN7/TAF1B family. Interacts with TFIIF. Interacts with MEE14/CBP1, TBP1 and NRPB1 (via CTD). As to expression, expressed at high levels in seedlings, inflorescences and young siliques and at lower levels in roots. Not detected in leaves and stems. Detected in root tips and shoot apical meristems, in anthers, primarily in microspores with weaker expression in mature pollen grains and in the central cell of the mature female gametophyte. Not expressed in synergids, egg cells, antipodal cells, endosperm cells and fertilized egg cells.

Its subcellular location is the nucleus. It is found in the nucleolus. In terms of biological role, component of RNA polymerase I core factor complex that acts as a GTF2B/TFIIB-like factor and plays a key role in multiple steps during transcription initiation such as pre-initiation complex (PIC) assembly and postpolymerase recruitment events in polymerase I (Pol I) transcription. Binds rDNA promoters and plays a role in Pol I recruitment. Required for the development of the one-cell zygote and endosperm in embryos. Required for micropylar pollen tube guidance, but has no effect on ovule development and gametophytic cell fate specification. May regulate the transcription of secreted cysteine-rich peptide (CRP) genes in the embryo sac. This Arabidopsis thaliana (Mouse-ear cress) protein is TATA box-binding protein-associated factor RNA polymerase I subunit B.